The sequence spans 411 residues: Dual-specificity RNA methyltransferase RlmN (411 aa).

E125 functions as the Proton acceptor in the catalytic mechanism. In terms of domain architecture, Radical SAM core spans 131–380; it reads EEGRGTLCIS…IRTPRGRDIL (250 aa). The cysteines at positions 138 and 383 are disulfide-linked. Residues C145, C149, and C152 each contribute to the [4Fe-4S] cluster site. S-adenosyl-L-methionine contacts are provided by residues 209-210, S241, 263-265, and N340; these read GE and SLH. C383 (S-methylcysteine intermediate) is an active-site residue.

The protein belongs to the radical SAM superfamily. RlmN family. [4Fe-4S] cluster is required as a cofactor.

The protein resides in the cytoplasm. The catalysed reaction is adenosine(2503) in 23S rRNA + 2 reduced [2Fe-2S]-[ferredoxin] + 2 S-adenosyl-L-methionine = 2-methyladenosine(2503) in 23S rRNA + 5'-deoxyadenosine + L-methionine + 2 oxidized [2Fe-2S]-[ferredoxin] + S-adenosyl-L-homocysteine. The enzyme catalyses adenosine(37) in tRNA + 2 reduced [2Fe-2S]-[ferredoxin] + 2 S-adenosyl-L-methionine = 2-methyladenosine(37) in tRNA + 5'-deoxyadenosine + L-methionine + 2 oxidized [2Fe-2S]-[ferredoxin] + S-adenosyl-L-homocysteine. In terms of biological role, specifically methylates position 2 of adenine 2503 in 23S rRNA and position 2 of adenine 37 in tRNAs. m2A2503 modification seems to play a crucial role in the proofreading step occurring at the peptidyl transferase center and thus would serve to optimize ribosomal fidelity. The polypeptide is Dual-specificity RNA methyltransferase RlmN (Brucella abortus (strain S19)).